Here is a 339-residue protein sequence, read N- to C-terminus: Putative NADP-dependent oxidoreductase YfmJ (339 aa).

Residues 156-159 (GAVG), Lys182, Tyr198, Asn222, 244-250 (CGAISSY), 277-279 (FIV), and Asn327 each bind NADP(+).

This sequence belongs to the NADP-dependent oxidoreductase L4BD family.

Functionally, putative quinone oxidoreductase that may contribute to the degradation of aromatic compounds. This is Putative NADP-dependent oxidoreductase YfmJ (yfmJ) from Bacillus subtilis (strain 168).